The chain runs to 382 residues: Chaperone protein DnaJ (382 aa).

The 65-residue stretch at 5–69 (DLYGVLGVAK…QKRANYDQSG (65 aa)) folds into the J domain. Residues 104–123 (QFFGGGGGQRNPNAPRPGRD) form a disordered region. The segment at 138-220 (GKKTKIKYNR…CGGSGHEEER (83 aa)) adopts a CR-type zinc-finger fold. Positions 151, 154, 168, 171, 194, 197, 208, and 211 each coordinate Zn(2+). CXXCXGXG motif repeat units lie at residues 151-158 (CHTCGGNG), 168-175 (CHQCGGSG), 194-201 (CPVCHGTG), and 208-215 (CPTCGGSG). Residues 358–382 (ASGESVTGSGKGNLFNKMRDKFNEN) form a disordered region.

Belongs to the DnaJ family. As to quaternary structure, homodimer. Requires Zn(2+) as cofactor.

Its subcellular location is the cytoplasm. Its function is as follows. Participates actively in the response to hyperosmotic and heat shock by preventing the aggregation of stress-denatured proteins and by disaggregating proteins, also in an autonomous, DnaK-independent fashion. Unfolded proteins bind initially to DnaJ; upon interaction with the DnaJ-bound protein, DnaK hydrolyzes its bound ATP, resulting in the formation of a stable complex. GrpE releases ADP from DnaK; ATP binding to DnaK triggers the release of the substrate protein, thus completing the reaction cycle. Several rounds of ATP-dependent interactions between DnaJ, DnaK and GrpE are required for fully efficient folding. Also involved, together with DnaK and GrpE, in the DNA replication of plasmids through activation of initiation proteins. This chain is Chaperone protein DnaJ, found in Levilactobacillus brevis (strain ATCC 367 / BCRC 12310 / CIP 105137 / JCM 1170 / LMG 11437 / NCIMB 947 / NCTC 947) (Lactobacillus brevis).